The following is a 1547-amino-acid chain: Transposon Ty3-G Gag-Pol polyprotein (1547 aa).

At serine 2 the chain carries N-acetylserine. The segment at 265–282 adopts a CCHC-type zinc-finger fold; it reads RLCFYCKKEGHRLNECRA. Aspartate 336 functions as the For protease activity; shared with dimeric partner in the catalytic mechanism. Residues 620–797 form the Reverse transcriptase domain; the sequence is LDNKFIVPSK…EETEFLGYSI (178 aa). Mg(2+) is bound by residues aspartate 686, aspartate 748, aspartate 749, aspartate 893, glutamate 936, and aspartate 961. An RNase H Ty3/gyspy-type domain is found at 893–1011; sequence DASKDGIGAV…VADAISRAVY (119 aa). The interval 1106 to 1145 is integrase-type zinc finger-like; the sequence is HTLFGGHFGVTVTLAKISPIYYWPKLQHSIIQYIRTCVQC. One can recognise an Integrase catalytic domain in the interval 1159 to 1324; sequence LQPLPIAEGR…SPFEIDLGYL (166 aa). Residues aspartate 1175 and aspartate 1236 each contribute to the Mg(2+) site.

In terms of assembly, the protease is a homodimer, whose active site consists of two apposed aspartic acid residues. Initially, virus-like particles (VLPs) are composed of the structural unprocessed proteins Gag and Gag-Pol, and also contain the host initiator methionine tRNA (tRNA(i)-Met) which serves as a primer for minus-strand DNA synthesis, and a dimer of genomic Ty RNA. Processing of the polyproteins occurs within the particle and proceeds by an ordered pathway, called maturation. First, the protease (PR) is released by autocatalytic cleavage of the Gag-Pol polyprotein, and this cleavage is a prerequisite for subsequent processing at the remaining sites to release the mature structural and catalytic proteins. Maturation takes place prior to the RT reaction and is required to produce transposition-competent VLPs.

Its subcellular location is the cytoplasm. The protein localises to the nucleus. It catalyses the reaction DNA(n) + a 2'-deoxyribonucleoside 5'-triphosphate = DNA(n+1) + diphosphate. The catalysed reaction is Endonucleolytic cleavage to 5'-phosphomonoester.. Functionally, capsid protein (CA) is the structural component of the virus-like particle (VLP), forming the shell that encapsulates the genomic RNA-nucleocapsid complex. Its function is as follows. Nucleocapsid protein p11 (NC) forms the nucleocore that coats the retro-elements dimeric RNA. Binds these RNAs through its zinc fingers. Promotes primer tRNA(i)-Met annealing to the multipartite primer-binding site (PBS), dimerization of Ty3 RNA and initiation of reverse transcription. In terms of biological role, the aspartyl protease (PR) mediates the proteolytic cleavages of the Gag and Gag-Pol polyproteins after assembly of the VLP. Reverse transcriptase/ribonuclease H (RT) is a multifunctional enzyme that catalyzes the conversion of the retro-elements RNA genome into dsDNA within the VLP. The enzyme displays a DNA polymerase activity that can copy either DNA or RNA templates, and a ribonuclease H (RNase H) activity that cleaves the RNA strand of RNA-DNA heteroduplexes during plus-strand synthesis and hydrolyzes RNA primers. The conversion leads to a linear dsDNA copy of the retrotransposon that includes long terminal repeats (LTRs) at both ends. Functionally, integrase (IN) targets the VLP to the nucleus, where a subparticle preintegration complex (PIC) containing at least integrase and the newly synthesized dsDNA copy of the retrotransposon must transit the nuclear membrane. Once in the nucleus, integrase performs the integration of the dsDNA into the host genome. The protein is Transposon Ty3-G Gag-Pol polyprotein (TY3B-G) of Saccharomyces cerevisiae (strain ATCC 204508 / S288c) (Baker's yeast).